A 408-amino-acid polypeptide reads, in one-letter code: Repulsive guidance molecule B homolog drag-1 (408 aa).

Positions 1-22 (MSIVYLVSITFIFSVFKPITSC) are cleaved as a signal peptide. The Extracellular portion of the chain corresponds to 23 to 387 (RVEECAAWFQ…SEIFKKCIPS (365 aa)). Asn60, Asn134, Asn183, and Asn376 each carry an N-linked (GlcNAc...) asparagine glycan. The helical transmembrane segment at 388–408 (KSIRFYPFLAIFFFALLSLLC) threads the bilayer.

This sequence belongs to the repulsive guidance molecule (RGM) family. As to quaternary structure, interacts with unc-40 (via FN6 domain), dbl-1 and sma-6. In terms of tissue distribution, expressed in pharyngeal, hypodermal and intestinal cells.

The protein resides in the cell membrane. Functionally, probably in association with the cell surface receptor unc-40, positively modulates the BMP-like Sma/Mab signaling pathway through interaction with both the ligand dbl-1 and its type I receptor sma-6. Regulates body size and this may be through modulation of the Sma/Mab signaling pathway. In Caenorhabditis elegans, this protein is Repulsive guidance molecule B homolog drag-1.